Here is a 75-residue protein sequence, read N- to C-terminus: Small ribosomal subunit protein bS18 (75 aa).

This sequence belongs to the bacterial ribosomal protein bS18 family. As to quaternary structure, part of the 30S ribosomal subunit. Forms a tight heterodimer with protein bS6.

Binds as a heterodimer with protein bS6 to the central domain of the 16S rRNA, where it helps stabilize the platform of the 30S subunit. This Aliivibrio fischeri (strain ATCC 700601 / ES114) (Vibrio fischeri) protein is Small ribosomal subunit protein bS18.